We begin with the raw amino-acid sequence, 228 residues long: UPF0758 protein CLB_3028 (228 aa).

Positions 106-228 (KISTPLDVSN…YVSMKEKGTI (123 aa)) constitute an MPN domain. H177, H179, and D190 together coordinate Zn(2+). Positions 177-190 (HNHPSGDPTPSKED) match the JAMM motif motif.

The protein belongs to the UPF0758 family.

The polypeptide is UPF0758 protein CLB_3028 (Clostridium botulinum (strain ATCC 19397 / Type A)).